Here is an 872-residue protein sequence, read N- to C-terminus: Alanine--tRNA ligase (872 aa).

Residues His567, His571, Cys669, and His673 each coordinate Zn(2+).

The protein belongs to the class-II aminoacyl-tRNA synthetase family. Zn(2+) is required as a cofactor.

The protein localises to the cytoplasm. The enzyme catalyses tRNA(Ala) + L-alanine + ATP = L-alanyl-tRNA(Ala) + AMP + diphosphate. In terms of biological role, catalyzes the attachment of alanine to tRNA(Ala) in a two-step reaction: alanine is first activated by ATP to form Ala-AMP and then transferred to the acceptor end of tRNA(Ala). Also edits incorrectly charged Ser-tRNA(Ala) and Gly-tRNA(Ala) via its editing domain. The protein is Alanine--tRNA ligase of Streptococcus pneumoniae serotype 4 (strain ATCC BAA-334 / TIGR4).